The primary structure comprises 784 residues: DNA ligase (784 aa).

Residues 35–39, 84–85, and E117 each bind NAD(+); these read DAEYD and SL. Residue K119 is the N6-AMP-lysine intermediate of the active site. R140, E177, K294, and K318 together coordinate NAD(+). C412, C415, C442, and C448 together coordinate Zn(2+). In terms of domain architecture, BRCT spans 703-784; sequence AEGLPLAGQT…FLALLRQLES (82 aa).

Belongs to the NAD-dependent DNA ligase family. LigA subfamily. Requires Mg(2+) as cofactor. The cofactor is Mn(2+).

The enzyme catalyses NAD(+) + (deoxyribonucleotide)n-3'-hydroxyl + 5'-phospho-(deoxyribonucleotide)m = (deoxyribonucleotide)n+m + AMP + beta-nicotinamide D-nucleotide.. DNA ligase that catalyzes the formation of phosphodiester linkages between 5'-phosphoryl and 3'-hydroxyl groups in double-stranded DNA using NAD as a coenzyme and as the energy source for the reaction. It is essential for DNA replication and repair of damaged DNA. The chain is DNA ligase from Azotobacter vinelandii (strain DJ / ATCC BAA-1303).